Consider the following 686-residue polypeptide: MTDTLLPAAPQPLEKEGNCYFRKGCNPLAQTGRSKLQNQRAALNQQILKAMRMRTGAENLLKAATNQKVREQVRLELSFLNSDLQMLKEELEGLNISVGVYQNTEEAFTIPLIPLGLKETKDVDFSVALKDFILEHYSEDSYLYEDEIADLMDLRQACRTPSRNEAGVELLMSYFMQLGFVESRFFPPTRQMGILFTWYDSLTGVPVSQQNLLLEKASILFNIGALYTQIGTRCNRQTEAGLESTVDAFQRAAGVLNYLKETFTHTPSYDMSPAMLSVLVKMMLAQAQESTFEKVCLPGLQNEFFLLVKVAQEAAKVGEVYRQLHTAMNQEPVKENIPYSWASLACVKAHHYEALAHYFTATLLIDHQLKPGEDEDHQEKCLSQLYSHMPEGLTPLATLKNVHQRQLLGKSHLCQAVTHHEESMREASLCKKLRNIDVLQEVLSAAHDRSQLKYTQLREDDDLLNLTDAPDIVSKTEREVEIIVPQFSKVTVTDFFQKLGPLSVFSANKRWTAPRSIHFTAEEGDLGFTLRGNSPVQVHFLDPYCSAAAAGTKEGDYIVSIQDVDCKWLTLSEVMKMLKSFGQDDIEMKVVSLLDATSTMHSKCATYSVGMQKTYSMICLGIDVDDKTDKTKKVSKKLSFLSWGTNKNRQKSASTLCLPSVGVTMPPVKKKLSSPFSLLNTDSSLY.

An REM-1 domain is found at 26–100; the sequence is NPLAQTGRSK…LEGLNISVGV (75 aa). The interval 46 to 66 is interaction with Rho; the sequence is QILKAMRMRTGAENLLKAATN. A BRO1 domain is found at 111–460; the sequence is PLIPLGLKET…QLKYTQLRED (350 aa). Residues 515 to 593 enclose the PDZ domain; the sequence is RSIHFTAEEG…DDIEMKVVSL (79 aa). T655 is modified (phosphothreonine).

It belongs to the RHPN family. Interacts with GTP-bound RhoA and RhoB. Interacts with both GTP- and GDP-bound RhoA. Interacts with KRT18.

It localises to the cytoplasm. The protein resides in the perinuclear region. Functionally, binds specifically to GTP-Rho. May function in a Rho pathway to limit stress fiber formation and/or increase the turnover of F-actin structures in the absence of high levels of RhoA activity. In Bos taurus (Bovine), this protein is Rhophilin-2 (RHPN2).